The following is a 259-amino-acid chain: MKDLPLSIGGKTLTSRFFLGTGRYPNPFVQNEVIRVSEAEVLTFAIRRVNLQAPGEDAILQHLEGKTFTYLPNTSGAKNAEEAIRIARLARASGLSDWIKVEISVNERTLLPDPVETLRATETLANEGFTVLPYTSDDPVLCKRLEEAGAAAVMPGGAPIGTGLGILNPYNLGLIVEEANVPIIVDAGLGSAQDVVQAMELGADGVLMNTPVAKAKDPVKMALAMKHAIEAGRLSYLAGRIPKKRYATASSGLETFISK.

Catalysis depends on lysine 100, which acts as the Schiff-base intermediate with DXP. Residues glycine 161, 187–188, and 209–210 contribute to the 1-deoxy-D-xylulose 5-phosphate site; these read AG and NT.

It belongs to the ThiG family. Homotetramer. Forms heterodimers with either ThiH or ThiS.

The protein localises to the cytoplasm. It carries out the reaction [ThiS sulfur-carrier protein]-C-terminal-Gly-aminoethanethioate + 2-iminoacetate + 1-deoxy-D-xylulose 5-phosphate = [ThiS sulfur-carrier protein]-C-terminal Gly-Gly + 2-[(2R,5Z)-2-carboxy-4-methylthiazol-5(2H)-ylidene]ethyl phosphate + 2 H2O + H(+). It functions in the pathway cofactor biosynthesis; thiamine diphosphate biosynthesis. In terms of biological role, catalyzes the rearrangement of 1-deoxy-D-xylulose 5-phosphate (DXP) to produce the thiazole phosphate moiety of thiamine. Sulfur is provided by the thiocarboxylate moiety of the carrier protein ThiS. In vitro, sulfur can be provided by H(2)S. The sequence is that of Thiazole synthase from Halalkalibacterium halodurans (strain ATCC BAA-125 / DSM 18197 / FERM 7344 / JCM 9153 / C-125) (Bacillus halodurans).